A 465-amino-acid chain; its full sequence is Argininosuccinate lyase (465 aa).

The protein belongs to the lyase 1 family. Argininosuccinate lyase subfamily.

The protein localises to the cytoplasm. It catalyses the reaction 2-(N(omega)-L-arginino)succinate = fumarate + L-arginine. It functions in the pathway amino-acid biosynthesis; L-arginine biosynthesis; L-arginine from L-ornithine and carbamoyl phosphate: step 3/3. This is Argininosuccinate lyase from Nitrobacter winogradskyi (strain ATCC 25391 / DSM 10237 / CIP 104748 / NCIMB 11846 / Nb-255).